A 105-amino-acid chain; its full sequence is Zinc metalloproteinase/disintegrin (105 aa).

Residues 1–3 form the Peptidase M12B domain; sequence DEP. Positions 11–96 constitute a Disintegrin domain; that stretch reads PPVCGNYFVE…AECTDRFQRN (86 aa). Intrachain disulfides connect cysteine 25-cysteine 43, cysteine 27-cysteine 38, cysteine 37-cysteine 60, cysteine 51-cysteine 57, cysteine 56-cysteine 82, and cysteine 69-cysteine 89. Residues 75–77 carry the D/ECD-tripeptide motif; sequence ECD. A propeptide spanning residues 99-105 is cleaved from the precursor; that stretch reads PCQNNNG.

Belongs to the venom metalloproteinase (M12B) family. P-III subfamily. Monomer. Requires Zn(2+) as cofactor. Expressed by the venom gland.

It localises to the secreted. Its function is as follows. Impairs hemostasis in the envenomed animal. Functionally, inhibits platelet aggregation induced by ADP, thrombin, platelet-activating factor and collagen. Acts by inhibiting fibrinogen interaction with platelet receptors GPIIb/GPIIIa (ITGA2B/ITGB3). In Gloydius brevicauda (Korean slamosa snake), this protein is Zinc metalloproteinase/disintegrin.